Here is a 698-residue protein sequence, read N- to C-terminus: MGDPGLSKLQFAPFNSALDVGFWHELTQKKLNEYRLDEAPKDIKGYYYNGDSAGLPTRLTLEFSAFDMSAPTPARCCPAMGTLHNTNTLEAFKTADKKLLLEQSANEIWEAIKSGAALENPMLLNKFLLLTFADLKKYHFYYWFCCPALCLPESIPLIRGPVGLDQRLSPKQIQALEHAYDDLCRTEGVTALPYFLFKYDDDTVLVSLLKHYSDFFQGQRTKLTVGVYDPCNLTQHPGWPLRNFLVLAAHRWSGSFQSVEVLCFRDRTMQGARDVTHSIIFEVKLPEMAFSPDCPKAVGWEKNQKGGMGPRMVNLSGCMDPKRLAESSVDLNLKLMCWRLVPTLDLDKVVSVKCLLLGAGTLGCNVARTLMGWGVRHVTFVDNAKISYSNPVRQPLYEFEDCLGGGKPKALAAAERLQKIFPGVNASGFNMSIPMPGHPVNFSDVTMEQARRDVEQLEELIDSHDVIFLLMDTRESRWLPTVIAASKRKLVINAALGFDTFVVMRHGLKKPKQQGAGDLCPSHLVAPADLGSSLFANIPGYKLGCYFCNDVVAPGDSTRDRTLDQQCTVSRPGLAVIAGALAVELMVSVLQHPEGGYAIASSSDDRMNEPPTSLGLVPHQIRGFLSRFDNVLPVSLAFDKCTACSSKVLDQYEQEGFTFLAKVFNSSHSFLEDLTGLTLLHQETQAAEIWDMSDEETV.

An FAP motif motif is present at residues phenylalanine 11–proline 13. Lysine 41 participates in a covalent cross-link: Glycyl lysine isopeptide (Lys-Gly) (interchain with G-Cter in ubiquitin). The active-site Glycyl thioester intermediate is cysteine 567. Serine 693 carries the post-translational modification Phosphoserine.

This sequence belongs to the ATG7 family. Homodimer. Interacts with ATG3; this interaction is essential for the transfer of ATG8-like proteins's thioester from ATG7 to ATG3 and plays a role in the conjugation of ATG12 to ATG5. Interacts with ATG12. Forms intermediate conjugates with GABARAPL1. Forms intermediate conjugates with ATG8-like proteins such as GABARAP, GABARAPL2 or MAP1LC3A. Interacts with EP300 acetyltransferase. Interacts with FOXO1. Post-translationally, acetylated by EP300. Polyubiquitinated on Lys-41 via 'Lys-63'-linked ubiquitin by TRIM32; this modification positiely regulates ATG8 and ATG12 activating enzyme activity leading to initiation of autophagy under metabolic stress. In terms of tissue distribution, widely expressed.

It is found in the cytoplasm. It localises to the preautophagosomal structure. Functionally, E1-like activating enzyme involved in the 2 ubiquitin-like systems required for cytoplasm to vacuole transport (Cvt) and autophagy. Activates ATG12 for its conjugation with ATG5 as well as the ATG8 family proteins for their conjugation with phosphatidylethanolamine. Both systems are needed for the ATG8 association to Cvt vesicles and autophagosomes membranes. Required for autophagic death induced by caspase-8 inhibition. Facilitates LC3-I lipidation with phosphatidylethanolamine to form LC3-II which is found on autophagosomal membranes. Required for mitophagy which contributes to regulate mitochondrial quantity and quality by eliminating the mitochondria to a basal level to fulfill cellular energy requirements and preventing excess ROS production. Modulates p53/TP53 activity to regulate cell cycle and survival during metabolic stress. Also plays a key role in the maintenance of axonal homeostasis, the prevention of axonal degeneration, the maintenance of hematopoietic stem cells, the formation of Paneth cell granules, as well as in adipose differentiation. Plays a role in regulating the liver clock and glucose metabolism by mediating the autophagic degradation of CRY1 (clock repressor) in a time-dependent manner. This is Ubiquitin-like modifier-activating enzyme ATG7 from Rattus norvegicus (Rat).